Consider the following 345-residue polypeptide: Ferrochelatase (345 aa).

Residues His199 and Glu302 each contribute to the Fe cation site.

It belongs to the ferrochelatase family.

It is found in the cytoplasm. The enzyme catalyses heme b + 2 H(+) = protoporphyrin IX + Fe(2+). The protein operates within porphyrin-containing compound metabolism; protoheme biosynthesis; protoheme from protoporphyrin-IX: step 1/1. Catalyzes the ferrous insertion into protoporphyrin IX. In Porphyromonas gingivalis (strain ATCC 33277 / DSM 20709 / CIP 103683 / JCM 12257 / NCTC 11834 / 2561), this protein is Ferrochelatase.